A 604-amino-acid chain; its full sequence is Glutamine--fructose-6-phosphate aminotransferase [isomerizing] (604 aa).

C2 functions as the Nucleophile; for GATase activity in the catalytic mechanism. One can recognise a Glutamine amidotransferase type-2 domain in the interval 2–218 (CGIVGVVGNR…DKELVILTKD (217 aa)). SIS domains are found at residues 284–423 (IITS…ANGK) and 452–594 (VAEK…VDKP). The active-site For Fru-6P isomerization activity is K599.

Homodimer.

The protein localises to the cytoplasm. The enzyme catalyses D-fructose 6-phosphate + L-glutamine = D-glucosamine 6-phosphate + L-glutamate. Functionally, catalyzes the first step in hexosamine metabolism, converting fructose-6P into glucosamine-6P using glutamine as a nitrogen source. This Streptococcus pyogenes serotype M3 (strain ATCC BAA-595 / MGAS315) protein is Glutamine--fructose-6-phosphate aminotransferase [isomerizing].